The primary structure comprises 515 residues: Glucose-6-phosphate 1-dehydrogenase (515 aa).

N-acetylalanine is present on alanine 2. Serine 8 carries the phosphoserine modification. Position 10 is a phosphothreonine (threonine 10). 38-45 (GASGDLAK) serves as a coordination point for NADP(+). Position 89 is an N6-acetyllysine (lysine 89). Residues tyrosine 147 and lysine 171 each coordinate NADP(+). D-glucose 6-phosphate is bound by residues lysine 171, 201–205 (HYLGK), glutamate 239, and glutamate 258. Position 171 is an N6-(2-hydroxyisobutyryl)lysine; alternate (lysine 171). Position 171 is an N6-acetyllysine; alternate (lysine 171). Residue arginine 357 participates in NADP(+) binding. D-glucose 6-phosphate-binding residues include lysine 360 and arginine 365. Lysine 366, arginine 370, and arginine 393 together coordinate NADP(+). D-glucose 6-phosphate is bound at residue glutamine 395. NADP(+) is bound by residues 401–403 (YTK) and 421–423 (DLT). The residue at position 403 (lysine 403) is an N6-acetyllysine. Lysine 432 is subject to N6-acetyllysine. Arginine 487 is an NADP(+) binding site. An N6-acetyllysine modification is found at lysine 497. NADP(+) contacts are provided by tyrosine 503 and tryptophan 509. At tyrosine 503 the chain carries Phosphotyrosine.

The protein belongs to the glucose-6-phosphate dehydrogenase family. In terms of assembly, homotetramer; dimer of dimers. Interacts with SIRT2; the interaction is enhanced by H(2)O(2) treatment. Forms a ternary complex with ALDOB and TP53; this interaction is direct. ALDOB stabilizes the complex inhibiting G6PD activity and keeping oxidative pentose phosphate metabolism in check. Post-translationally, acetylated by ELP3 at Lys-403; acetylation inhibits its homodimerization and enzyme activity. Deacetylated by SIRT2 at Lys-403; deacetylation stimulates its enzyme activity.

The protein localises to the cytoplasm. The protein resides in the cytosol. It is found in the membrane. It catalyses the reaction D-glucose 6-phosphate + NADP(+) = 6-phospho-D-glucono-1,5-lactone + NADPH + H(+). The protein operates within carbohydrate degradation; pentose phosphate pathway; D-ribulose 5-phosphate from D-glucose 6-phosphate (oxidative stage): step 1/3. Cytosolic glucose-6-phosphate dehydrogenase that catalyzes the first and rate-limiting step of the oxidative branch within the pentose phosphate pathway/shunt, an alternative route to glycolysis for the dissimilation of carbohydrates and a major source of reducing power and metabolic intermediates for fatty acid and nucleic acid biosynthetic processes. The polypeptide is Glucose-6-phosphate 1-dehydrogenase (G6PD) (Bos indicus (Zebu)).